The chain runs to 335 residues: Peroxidase 2 (335 aa).

The N-terminal stretch at 1 to 29 (MAAATAPKTMPSSVFAAALLLLAAAACQA) is a signal peptide. 4 disulfides stabilise this stretch: Cys-44/Cys-125, Cys-77/Cys-82, Cys-131/Cys-329, and Cys-212/Cys-238. The Proton acceptor role is filled by His-75. The Ca(2+) site is built by Asp-76, Val-79, Gly-81, Asp-83, and Ser-85. 2 N-linked (GlcNAc...) asparagine glycosylation sites follow: Asn-166 and Asn-180. His-205 is a binding site for heme b. Thr-206 is a Ca(2+) binding site. A glycan (N-linked (GlcNAc...) asparagine) is linked at Asn-241. Residues Asp-253, Thr-256, and Asp-261 each contribute to the Ca(2+) site.

Belongs to the peroxidase family. Classical plant (class III) peroxidase subfamily. Heme b is required as a cofactor. Ca(2+) serves as cofactor. Expressed in the elongating region of young roots, and in root vascular tissues and epidermis.

The protein resides in the secreted. It carries out the reaction 2 a phenolic donor + H2O2 = 2 a phenolic radical donor + 2 H2O. In terms of biological role, removal of H(2)O(2), oxidation of toxic reductants, biosynthesis and degradation of lignin, suberization, auxin catabolism, response to environmental stresses such as wounding, pathogen attack and oxidative stress. These functions might be dependent on each isozyme/isoform in each plant tissue. The protein is Peroxidase 2 (PER2) of Zea mays (Maize).